Consider the following 368-residue polypeptide: MAGERRDSKAAAFFCLAWALCLALPGFPQHVGGREDRADWTQEKYSHRPTILNATSILQVTSQTNVNRMWQNDLHPILIERYPGSPGSYAVRQHIKHRLQGLQAGWLVEEDTFQSHTPYGYRTFSNIISTLNPLAKRHLVVACHYDSKYFLPQLDGKVFVGATDSAVPCAMMLELARSLDRQLSFLKQSSLPPKADLSLKLIFFDGEEAFVRWSPSDSLYGSRSLAQKMASTPHPPGARNTNQIQGIDLFVLLDLIGARNPVFPVYFLNTARWFGRLEAIEQSLHDLGLLNNYSSERQYFRSNLRRYPVEDDHIPFLRRGVPILHLIPSPFPRVWHTMEDNEENLDKPTIDNISKILQVFVLEYLNLG.

The N-terminal stretch at 1 to 23 is a signal peptide; that stretch reads MAGERRDSKAAAFFCLAWALCLA. N-linked (GlcNAc...) asparagine glycosylation occurs at N53. C143 and C169 are joined by a disulfide. D164 lines the Zn(2+) pocket. E207 acts as the Proton acceptor in catalysis. Position 208 (E208) interacts with Zn(2+). The active-site Proton acceptor is the D254. The N-linked (GlcNAc...) asparagine glycan is linked to N292. Zn(2+) is bound at residue H336. N352 is a glycosylation site (N-linked (GlcNAc...) asparagine).

Belongs to the glutaminyl-peptide cyclotransferase family. As to expression, expressed by the venom gland.

It localises to the secreted. The enzyme catalyses N-terminal L-glutaminyl-[peptide] = N-terminal 5-oxo-L-prolyl-[peptide] + NH4(+). Functionally, responsible for the biosynthesis of pyroglutamyl peptides. Has a bias against acidic and tryptophan residues adjacent to the N-terminal glutaminyl residue and a lack of importance of chain length after the second residue. Also catalyzes N-terminal pyroglutamate formation. This is Glutaminyl-peptide cyclotransferase (QPCT) from Boiga irregularis (Brown tree snake).